The sequence spans 470 residues: ATP-dependent protease ATPase subunit HslU (470 aa).

ATP is bound by residues Val22 and 64–69 (GVGKTE). Residues 145-187 (KKANNNTNSNNPLESLFGGSIPNFGQNNDDEEETPTDEVKTKR) form a disordered region. ATP is bound by residues Asp283, Glu348, and Arg420.

The protein belongs to the ClpX chaperone family. HslU subfamily. In terms of assembly, a double ring-shaped homohexamer of HslV is capped on each side by a ring-shaped HslU homohexamer. The assembly of the HslU/HslV complex is dependent on binding of ATP.

It localises to the cytoplasm. Its function is as follows. ATPase subunit of a proteasome-like degradation complex; this subunit has chaperone activity. The binding of ATP and its subsequent hydrolysis by HslU are essential for unfolding of protein substrates subsequently hydrolyzed by HslV. HslU recognizes the N-terminal part of its protein substrates and unfolds these before they are guided to HslV for hydrolysis. This is ATP-dependent protease ATPase subunit HslU from Staphylococcus saprophyticus subsp. saprophyticus (strain ATCC 15305 / DSM 20229 / NCIMB 8711 / NCTC 7292 / S-41).